The following is a 317-amino-acid chain: MTRQFLEFEQPIEELNQKIEALRMVGSDNEVNLSEEIARLEAKCSELTENIFSRLEPWQIAQMARHPLRPQTTDYIERIFTDFQELHGDRSYSSAPAIIGGMARLNGEPVMVLGHQKGKRTKEKVYRNFGMARPEEYRKALRLMRMAEKFKMPVVTFIDTAGAYPGIGAEERNQSEAIARNLFAMSRIKTPIVCIVTGEAGSGGALAIGVGDKIIMLQFSIYSVISPEGCASILWKDASKASEAARAMGITADRIFENELVDMVVPEPLGGAHRDVDEMASRLKRLLTSELQALKKVPLDQLIELRYQKFMAMGACD.

The region spanning 32-293 (NLSEEIARLE…KRLLTSELQA (262 aa)) is the CoA carboxyltransferase C-terminal domain.

It belongs to the AccA family. In terms of assembly, acetyl-CoA carboxylase is a heterohexamer composed of biotin carboxyl carrier protein (AccB), biotin carboxylase (AccC) and two subunits each of ACCase subunit alpha (AccA) and ACCase subunit beta (AccD).

It is found in the cytoplasm. The enzyme catalyses N(6)-carboxybiotinyl-L-lysyl-[protein] + acetyl-CoA = N(6)-biotinyl-L-lysyl-[protein] + malonyl-CoA. It participates in lipid metabolism; malonyl-CoA biosynthesis; malonyl-CoA from acetyl-CoA: step 1/1. Component of the acetyl coenzyme A carboxylase (ACC) complex. First, biotin carboxylase catalyzes the carboxylation of biotin on its carrier protein (BCCP) and then the CO(2) group is transferred by the carboxyltransferase to acetyl-CoA to form malonyl-CoA. The chain is Acetyl-coenzyme A carboxylase carboxyl transferase subunit alpha from Legionella pneumophila (strain Paris).